A 967-amino-acid polypeptide reads, in one-letter code: Probable helicase DDB_G0274399 (967 aa).

A disordered region spans residues 161-192 (EMTDDEDTAPTSAATHVGAPTKSTTTTTTTTT). 357–364 (GPPGTGKT) lines the ATP pocket. Disordered regions lie at residues 529-553 (SAIP…QDTS) and 892-967 (QKQK…RTRR). Positions 890–949 (NLQKQKDIEKRKKQHKRQKQKSKENDKKKQLKKRKELNNNDNNNNNKESSNKEVQEITNA) form a coiled coil. Residues 900–909 (RKKQHKRQKQ) are compositionally biased toward basic residues. The segment covering 928 to 937 (NNDNNNNNKE) has biased composition (low complexity).

Belongs to the DNA2/NAM7 helicase family.

The protein localises to the nucleus. This chain is Probable helicase DDB_G0274399, found in Dictyostelium discoideum (Social amoeba).